The sequence spans 273 residues: Putative cysteine-rich repeat secretory protein 40 (273 aa).

The N-terminal stretch at M1–S32 is a signal peptide. Gnk2-homologous domains lie at Y39 to V141 and Y151 to F264.

This sequence belongs to the cysteine-rich repeat secretory protein family.

The protein resides in the secreted. The chain is Putative cysteine-rich repeat secretory protein 40 (CRRSP40) from Arabidopsis thaliana (Mouse-ear cress).